We begin with the raw amino-acid sequence, 284 residues long: MEMO1 family protein MMP1387 (284 aa).

This sequence belongs to the MEMO1 family.

The chain is MEMO1 family protein MMP1387 from Methanococcus maripaludis (strain DSM 14266 / JCM 13030 / NBRC 101832 / S2 / LL).